Here is a 128-residue protein sequence, read N- to C-terminus: MMTAVSLTTRPQESVAFEDVAVYFTTKEWAIMVPAERALYRDVMLENYEAVAFVVPPTSKPALVSHLEQGKESCFTQPQGVLSRNDWRAGWIGYLELRRYTYLAKAVLRRIVSKIFRNRQCWEDRRKA.

The region spanning 15-86 (VAFEDVAVYF…QPQGVLSRND (72 aa)) is the KRAB domain.

In Homo sapiens (Human), this protein is KRAB domain-containing protein 1 (KRBOX1).